Reading from the N-terminus, the 498-residue chain is ATP synthase subunit beta, chloroplastic (498 aa).

ATP is bound at residue 172–179 (GGAGVGKT).

The protein belongs to the ATPase alpha/beta chains family. In terms of assembly, F-type ATPases have 2 components, CF(1) - the catalytic core - and CF(0) - the membrane proton channel. CF(1) has five subunits: alpha(3), beta(3), gamma(1), delta(1), epsilon(1). CF(0) has four main subunits: a(1), b(1), b'(1) and c(9-12).

It is found in the plastid. It localises to the chloroplast thylakoid membrane. It catalyses the reaction ATP + H2O + 4 H(+)(in) = ADP + phosphate + 5 H(+)(out). Functionally, produces ATP from ADP in the presence of a proton gradient across the membrane. The catalytic sites are hosted primarily by the beta subunits. This is ATP synthase subunit beta, chloroplastic from Gossypium barbadense (Sea Island cotton).